The chain runs to 209 residues: MKTLVILSSILGDRSNSKQLADHLLARLKQSEPGGTVKIRDLAADPVPYFDGATVGALFTPAEARNAQQQRIAALSDDLVAELFDADRIVFAVPVYNFNLPAQFKSYIDHIARAGVTFRYTAEGKPEGLVQGKQVLVLIARGGKSEGTPDDTMTPYLKQMLAFLGMTDVTFIAAEGMAMGELAAQEGLALARQRIDALSLDARQGLAAA.

FMN contacts are provided by residues Ser-9 and 15–17 (SNS).

It belongs to the azoreductase type 1 family. In terms of assembly, homodimer. FMN is required as a cofactor.

It carries out the reaction 2 a quinone + NADH + H(+) = 2 a 1,4-benzosemiquinone + NAD(+). The enzyme catalyses N,N-dimethyl-1,4-phenylenediamine + anthranilate + 2 NAD(+) = 2-(4-dimethylaminophenyl)diazenylbenzoate + 2 NADH + 2 H(+). Quinone reductase that provides resistance to thiol-specific stress caused by electrophilic quinones. Its function is as follows. Also exhibits azoreductase activity. Catalyzes the reductive cleavage of the azo bond in aromatic azo compounds to the corresponding amines. This is FMN-dependent NADH:quinone oxidoreductase from Bordetella bronchiseptica (strain ATCC BAA-588 / NCTC 13252 / RB50) (Alcaligenes bronchisepticus).